A 158-amino-acid chain; its full sequence is Endoribonuclease YbeY (158 aa).

Zn(2+) is bound by residues His124, His128, and His134.

This sequence belongs to the endoribonuclease YbeY family. Zn(2+) is required as a cofactor.

Its subcellular location is the cytoplasm. In terms of biological role, single strand-specific metallo-endoribonuclease involved in late-stage 70S ribosome quality control and in maturation of the 3' terminus of the 16S rRNA. The polypeptide is Endoribonuclease YbeY (Caldicellulosiruptor bescii (strain ATCC BAA-1888 / DSM 6725 / KCTC 15123 / Z-1320) (Anaerocellum thermophilum)).